A 234-amino-acid chain; its full sequence is ATP synthase subunit delta, chloroplastic (234 aa).

The N-terminal 47 residues, Met-1–Met-47, are a transit peptide targeting the chloroplast. The residue at position 48 (Ser-48) is an N-acetylserine. N-linked (GlcNAc...) asparagine glycosylation is present at Asn-66. Thr-234 is subject to Phosphothreonine.

The protein belongs to the ATPase delta chain family. As to quaternary structure, F-type ATPases have 2 components, F(1) - the catalytic core - and F(0) - the membrane proton channel. F(1) has five subunits: alpha(3), beta(3), gamma(1), delta(1), epsilon(1). CF(0) has four main subunits: a(1), b(1), b'(1) and c(10-14). The alpha and beta chains form an alternating ring which encloses part of the gamma chain. F(1) is attached to F(0) by a central stalk formed by the gamma and epsilon chains, while a peripheral stalk is formed by the delta, b and b' chains.

The protein localises to the plastid. Its subcellular location is the chloroplast thylakoid membrane. F(1)F(0) ATP synthase produces ATP from ADP in the presence of a proton or sodium gradient. F-type ATPases consist of two structural domains, F(1) containing the extramembraneous catalytic core and F(0) containing the membrane proton channel, linked together by a central stalk and a peripheral stalk. During catalysis, ATP synthesis in the catalytic domain of F(1) is coupled via a rotary mechanism of the central stalk subunits to proton translocation (Potential). Essential for photosynthesis, probably by facilitating electron transport in both photosystems I and II. Its function is as follows. This protein is part of the stalk that links CF(0) to CF(1). It either transmits conformational changes from CF(0) to CF(1) or is implicated in proton conduction. In Arabidopsis thaliana (Mouse-ear cress), this protein is ATP synthase subunit delta, chloroplastic.